Consider the following 786-residue polypeptide: Ribosome biogenesis protein BOP1 homolog (786 aa).

A compositionally biased stretch (basic residues) spans M1–V11. Residues M1 to I161 are disordered. Composition is skewed to acidic residues over residues D28 to L37, E46 to D55, S62 to G74, and S86 to A103. The segment covering D104 to D113 has biased composition (basic and acidic residues). Residues A151 to D160 show a composition bias toward acidic residues. WD repeat units follow at residues G447–E488, E490–V528, T572–P614, K617–K655, T658–Q697, L701–Q740, and R756–T786.

The protein belongs to the WD repeat BOP1/ERB1 family.

Its subcellular location is the nucleus. The protein localises to the nucleolus. It is found in the nucleoplasm. Functionally, required for maturation of ribosomal RNAs and formation of the large ribosomal subunit. In Drosophila pseudoobscura pseudoobscura (Fruit fly), this protein is Ribosome biogenesis protein BOP1 homolog.